The chain runs to 75 residues: Large ribosomal subunit protein uL29 (75 aa).

The protein belongs to the universal ribosomal protein uL29 family.

The protein is Large ribosomal subunit protein uL29 of Pyrobaculum aerophilum (strain ATCC 51768 / DSM 7523 / JCM 9630 / CIP 104966 / NBRC 100827 / IM2).